The primary structure comprises 522 residues: Cytochrome P450 monooxygenase FGSG_08207 (522 aa).

A helical membrane pass occupies residues 10–30; the sequence is LLLSKPVVLGLAACALLFLIG. 2 N-linked (GlcNAc...) asparagine glycosylation sites follow: Asn-104 and Asn-155. Cys-441 serves as a coordination point for heme.

The protein belongs to the cytochrome P450 family. Heme is required as a cofactor.

It localises to the membrane. It functions in the pathway secondary metabolite biosynthesis. Its function is as follows. Cytochrome P450 monooxygenase; part of the gene cluster that mediates the biosynthesis of the lipopeptide fusaristatin A. Fusaristatin A consists of a polyketide chain linked to three amino acid residues glutamine (Gln), dehydroalanine (dehydro-Ala), and beta-aminoisobutyric acid. The biosynthesis starts with formation of a linear polyketide chain by the highly reducing polyketide synthase PKS6. The gene cluster does not contain an acyl-CoA ligase or an acyl-transferase, and it is therefore predicted that the polyketide is transferred directly to the nonribosomal peptide synthetase NRPS7. Modules 1-3 from NRPS7 incorporate dehydro-Ala, Gln, and beta-aminoisobutyric acid in the compound, which is released by cyclization. The beta-aminoisobutyric acid units are most likely not freely available to the NRPS, but can be synthesized from thymine, which requires a dehydrogenase, a monooxygenase, and an aminotransferase. The fusaristatin A cluster contains a cytochrome P450 monooxygenase (FGSG_08207) and an aminotransferase (FGSG_17085), which theoretically can perform two of the enzymatic steps. The enzymes may however also be involved in biosynthesis of dehydroalanine or modification of the polyketide. The dehydro-Ala residue can be a result of cyclization, where serine is dehydrated. The last gene of the cluster encodes a protein with an A/B barrel domain found in variable enzymes, which hampers functional prediction. This chain is Cytochrome P450 monooxygenase FGSG_08207, found in Gibberella zeae (strain ATCC MYA-4620 / CBS 123657 / FGSC 9075 / NRRL 31084 / PH-1) (Wheat head blight fungus).